A 1260-amino-acid chain; its full sequence is Kinesin-like protein KIN-14E (1260 aa).

The MyTH4 domain maps to 115-274 (FQKDPIPTSL…PGREEIEALL (160 aa)). Residues 279-593 (LTTIVFFLDE…HINDVMLRRY (315 aa)) enclose the FERM domain. Coiled coils occupy residues 615–676 (QNFE…LLEV) and 753–853 (SKRL…TAAI). Positions 888-1209 (KIRVYCRIRP…LLYASRVRTI (322 aa)) constitute a Kinesin motor domain. 972–977 (GSGKTF) is an ATP binding site. The calmodulin-binding stretch occupies residues 1217 to 1239 (ISSKEMVRLKKLVAYWKEQAGKK). Residues 1221–1260 (EMVRLKKLVAYWKEQAGKKGEEEDLVDIEEDRTRKDEADS) are homodimerization domain. The tract at residues 1236-1260 (AGKKGEEEDLVDIEEDRTRKDEADS) is disordered. Over residues 1251 to 1260 (DRTRKDEADS) the composition is skewed to basic and acidic residues.

The protein belongs to the TRAFAC class myosin-kinesin ATPase superfamily. Kinesin family. KIN-14 subfamily. As to quaternary structure, homodimer (via C-terminus). Binds microtubules via its N-terminus containing the MyTH4 domain and binds F-actin via its FERM domain. Interacts with KIPK1. Interacts with KIPK2. Interacts with AN. Interacts with AIR9. Interacts (via C-terminus) with KIC, CAM2, CAM4 and CAM6. KIC and calmodulin show competitive binding to KCBP. Binding to calmodulin inhibits microtubule binding activity. Binding to KIC inhibits microtubule binding activity and microtubule-stimulated ATPase activity. Widely expressed with the highest levels in flowers. Strongly expressed in the root tip. Highly detected in the branch apex of the trichome.

The protein localises to the cytoplasm. Its subcellular location is the cell cortex. The protein resides in the cytoskeleton. It localises to the spindle. It is found in the phragmoplast. Minus-end microtubule-dependent motor protein involved in the regulation of cell division and trichome morphogenesis through microtubules bundling. Possesses basal and microtubule-stimulated ATPase activities. Acts as a hub that brings together microtubules and actin filaments to modulate the cytoskeleton during trichome formation and morphogenesis. Could be involved in the negative regulation of root growth. The sequence is that of Kinesin-like protein KIN-14E from Arabidopsis thaliana (Mouse-ear cress).